Here is a 172-residue protein sequence, read N- to C-terminus: Capsid protein (172 aa).

The tract at residues 1–26 is disordered; that stretch reads MASKWNWSGTKGRRTPRRPYGRPYKS. The segment covering 11-20 has biased composition (basic residues); it reads KGRRTPRRPY.

This sequence belongs to the nanoviridae capsid protein family.

Its subcellular location is the virion. The sequence is that of Capsid protein (DNA-S) from Faba bean necrotic yellows virus (isolate Syrian SV292-88) (FBNYV).